Consider the following 394-residue polypeptide: LL-diaminopimelate aminotransferase (394 aa).

Residues tyrosine 14 and glycine 41 each contribute to the substrate site. Pyridoxal 5'-phosphate-binding positions include tyrosine 71, 104 to 105 (AK), tyrosine 128, asparagine 174, tyrosine 205, and 233 to 235 (SFS). Residues lysine 105, tyrosine 128, and asparagine 174 each coordinate substrate. Position 236 is an N6-(pyridoxal phosphate)lysine (lysine 236). Positions 244 and 275 each coordinate pyridoxal 5'-phosphate. Substrate contacts are provided by asparagine 275 and arginine 369.

Belongs to the class-I pyridoxal-phosphate-dependent aminotransferase family. LL-diaminopimelate aminotransferase subfamily. In terms of assembly, homodimer. It depends on pyridoxal 5'-phosphate as a cofactor.

It catalyses the reaction (2S,6S)-2,6-diaminopimelate + 2-oxoglutarate = (S)-2,3,4,5-tetrahydrodipicolinate + L-glutamate + H2O + H(+). It functions in the pathway amino-acid biosynthesis; L-lysine biosynthesis via DAP pathway; LL-2,6-diaminopimelate from (S)-tetrahydrodipicolinate (aminotransferase route): step 1/1. Its function is as follows. Involved in the synthesis of meso-diaminopimelate (m-DAP or DL-DAP), required for both lysine and peptidoglycan biosynthesis. Catalyzes the direct conversion of tetrahydrodipicolinate to LL-diaminopimelate. The sequence is that of LL-diaminopimelate aminotransferase from Chlamydia trachomatis serovar L2b (strain UCH-1/proctitis).